The chain runs to 85 residues: Large ribosomal subunit protein bL27 (85 aa).

It belongs to the bacterial ribosomal protein bL27 family.

The protein is Large ribosomal subunit protein bL27 of Campylobacter curvus (strain 525.92).